Reading from the N-terminus, the 307-residue chain is Aspartate carbamoyltransferase catalytic subunit (307 aa).

Residues arginine 54 and threonine 55 each coordinate carbamoyl phosphate. Lysine 83 is an L-aspartate binding site. Carbamoyl phosphate is bound by residues arginine 104, histidine 132, and glutamine 135. The L-aspartate site is built by arginine 165 and arginine 228. Leucine 267 and proline 268 together coordinate carbamoyl phosphate.

It belongs to the aspartate/ornithine carbamoyltransferase superfamily. ATCase family. As to quaternary structure, heterododecamer (2C3:3R2) of six catalytic PyrB chains organized as two trimers (C3), and six regulatory PyrI chains organized as three dimers (R2).

The catalysed reaction is carbamoyl phosphate + L-aspartate = N-carbamoyl-L-aspartate + phosphate + H(+). It participates in pyrimidine metabolism; UMP biosynthesis via de novo pathway; (S)-dihydroorotate from bicarbonate: step 2/3. Catalyzes the condensation of carbamoyl phosphate and aspartate to form carbamoyl aspartate and inorganic phosphate, the committed step in the de novo pyrimidine nucleotide biosynthesis pathway. The protein is Aspartate carbamoyltransferase catalytic subunit of Clostridium perfringens (strain ATCC 13124 / DSM 756 / JCM 1290 / NCIMB 6125 / NCTC 8237 / Type A).